A 555-amino-acid chain; its full sequence is Vacuolar fusion protein MON1 homolog A (555 aa).

Positions 1-12 (MAADMQRKRSSE) are enriched in basic and acidic residues. The disordered stretch occupies residues 1–90 (MAADMQRKRS…PPLATDMRQI (90 aa)). 2 positions are modified to phosphoserine: S31 and S56. T61 carries the phosphothreonine modification. S91 carries the phosphoserine modification. A disordered region spans residues 112–149 (MLPGSSEDWPESPGAARRPATEPPRDGAGEGDEEEAAE). The span at 130–139 (PATEPPRDGA) shows a compositional bias: basic and acidic residues.

Belongs to the MON1/SAND family. Interacts with CCZ1. Found in a complex with RMC1, CCZ1, MON1A and MON1B. The MON1A-CCZ1B complex interacts with RIMOC1. The MON1A-CCZ1B complex interacts with RAB7A and this interaction is enhanced in the presence of RIMOC1.

Functionally, plays an important role in membrane trafficking through the secretory apparatus. Not involved in endocytic trafficking to lysosomes. Acts in concert with CCZ1, as a guanine exchange factor (GEF) for RAB7, promotes the exchange of GDP to GTP, converting it from an inactive GDP-bound form into an active GTP-bound form. This is Vacuolar fusion protein MON1 homolog A (MON1A) from Bos taurus (Bovine).